Reading from the N-terminus, the 527-residue chain is Chorismate synthase (527 aa).

Catalysis depends on residues H17, H104, and D485.

It belongs to the chorismate synthase family.

It is found in the cytoplasm. The protein resides in the cytosol. The enzyme catalyses 5-O-(1-carboxyvinyl)-3-phosphoshikimate = chorismate + phosphate. The catalysed reaction is FMNH2 + NADP(+) = FMN + NADPH + 2 H(+). The protein operates within metabolic intermediate biosynthesis; chorismate biosynthesis; chorismate from D-erythrose 4-phosphate and phosphoenolpyruvate: step 7/7. Functionally, bifunctional chorismate synthase and flavin reductase. Catalyzes the conversion of 5-enolpyruvylshikimate 3-phosphate (EPSP) to form chorismate. Acts also as a flavin reductase (FR) able to generate reduced flavin mononucleotide in the presence of NADPH. This is Chorismate synthase from Plasmodium falciparum (isolate 3D7).